The chain runs to 331 residues: MTAATAPDGRRMLRLEVRNAETPIERKPGWIKTTARMGPEYQALQQLVKTEDLHTVCQEAACPNIYECWEDREATFLIGGSQCTRRCDFCQIDTGKPADYDTDEPRRVADSVRRMGLRYATVTGVARDDLPDEGAWLHAETVRRIHADNPGTGVEILATDFSGNPDLLAEVFSSRPEVFAHNVETVPRIFKRIRPAFRYERSLDVITQARDAGLITKSNLILGMGETRDEVSEALVDLHDAGCDIITVTQYLRPSPRHLPVARWVRPEEFVEIKAEAEAIGFLGVLAGPLVRSSYRAGRLYAQSMRAKGRELPEGLAHLADPANGFAQAVG.

Positions 57, 62, 68, 83, 87, 90, and 294 each coordinate [4Fe-4S] cluster. The region spanning 69–283 is the Radical SAM core domain; it reads WEDREATFLI…KAEAEAIGFL (215 aa).

It belongs to the radical SAM superfamily. Lipoyl synthase family. The cofactor is [4Fe-4S] cluster.

It localises to the cytoplasm. It carries out the reaction [[Fe-S] cluster scaffold protein carrying a second [4Fe-4S](2+) cluster] + N(6)-octanoyl-L-lysyl-[protein] + 2 oxidized [2Fe-2S]-[ferredoxin] + 2 S-adenosyl-L-methionine + 4 H(+) = [[Fe-S] cluster scaffold protein] + N(6)-[(R)-dihydrolipoyl]-L-lysyl-[protein] + 4 Fe(3+) + 2 hydrogen sulfide + 2 5'-deoxyadenosine + 2 L-methionine + 2 reduced [2Fe-2S]-[ferredoxin]. Its pathway is protein modification; protein lipoylation via endogenous pathway; protein N(6)-(lipoyl)lysine from octanoyl-[acyl-carrier-protein]: step 2/2. Catalyzes the radical-mediated insertion of two sulfur atoms into the C-6 and C-8 positions of the octanoyl moiety bound to the lipoyl domains of lipoate-dependent enzymes, thereby converting the octanoylated domains into lipoylated derivatives. This chain is Lipoyl synthase, found in Clavibacter michiganensis subsp. michiganensis (strain NCPPB 382).